The following is a 328-amino-acid chain: Tetraacyldisaccharide 4'-kinase (328 aa).

Residue 58 to 65 coordinates ATP; sequence TMGGAGKT.

The protein belongs to the LpxK family.

The enzyme catalyses a lipid A disaccharide + ATP = a lipid IVA + ADP + H(+). The protein operates within glycolipid biosynthesis; lipid IV(A) biosynthesis; lipid IV(A) from (3R)-3-hydroxytetradecanoyl-[acyl-carrier-protein] and UDP-N-acetyl-alpha-D-glucosamine: step 6/6. Functionally, transfers the gamma-phosphate of ATP to the 4'-position of a tetraacyldisaccharide 1-phosphate intermediate (termed DS-1-P) to form tetraacyldisaccharide 1,4'-bis-phosphate (lipid IVA). The chain is Tetraacyldisaccharide 4'-kinase from Phenylobacterium zucineum (strain HLK1).